The primary structure comprises 331 residues: D-alanine--D-alanine ligase (331 aa).

Residues 122–328 (KLWYDAIGIP…FHEFLADCIE (207 aa)) enclose the ATP-grasp domain. Residue 152-207 (AFDKWGKLFVKAARQGSSVGCYSVTNIEQLSDAIDKAFGFSHQVLVEKAVKPRELE) participates in ATP binding. Residues D282, E295, and N297 each contribute to the Mg(2+) site.

The protein belongs to the D-alanine--D-alanine ligase family. It depends on Mg(2+) as a cofactor. Requires Mn(2+) as cofactor.

It is found in the cytoplasm. The catalysed reaction is 2 D-alanine + ATP = D-alanyl-D-alanine + ADP + phosphate + H(+). Its pathway is cell wall biogenesis; peptidoglycan biosynthesis. Cell wall formation. The protein is D-alanine--D-alanine ligase of Vibrio vulnificus (strain YJ016).